We begin with the raw amino-acid sequence, 331 residues long: Ketol-acid reductoisomerase (NADP(+)) (331 aa).

One can recognise a KARI N-terminal Rossmann domain in the interval 2–182 (IKKYYDADCN…GAGRAGILET (181 aa)). NADP(+) is bound by residues 25–28 (YGSQ), Arg-48, and Ser-51. The active site involves His-108. NADP(+) is bound at residue Gly-134. The region spanning 183–329 (TFREETETDL…AELRKMMSWI (147 aa)) is the KARI C-terminal knotted domain. Mg(2+) is bound by residues Asp-191, Glu-195, Glu-227, and Glu-231. Ser-252 lines the substrate pocket.

It belongs to the ketol-acid reductoisomerase family. Mg(2+) serves as cofactor.

The enzyme catalyses (2R)-2,3-dihydroxy-3-methylbutanoate + NADP(+) = (2S)-2-acetolactate + NADPH + H(+). The catalysed reaction is (2R,3R)-2,3-dihydroxy-3-methylpentanoate + NADP(+) = (S)-2-ethyl-2-hydroxy-3-oxobutanoate + NADPH + H(+). It functions in the pathway amino-acid biosynthesis; L-isoleucine biosynthesis; L-isoleucine from 2-oxobutanoate: step 2/4. The protein operates within amino-acid biosynthesis; L-valine biosynthesis; L-valine from pyruvate: step 2/4. In terms of biological role, involved in the biosynthesis of branched-chain amino acids (BCAA). Catalyzes an alkyl-migration followed by a ketol-acid reduction of (S)-2-acetolactate (S2AL) to yield (R)-2,3-dihydroxy-isovalerate. In the isomerase reaction, S2AL is rearranged via a Mg-dependent methyl migration to produce 3-hydroxy-3-methyl-2-ketobutyrate (HMKB). In the reductase reaction, this 2-ketoacid undergoes a metal-dependent reduction by NADPH to yield (R)-2,3-dihydroxy-isovalerate. The polypeptide is Ketol-acid reductoisomerase (NADP(+)) (Brachyspira hyodysenteriae (strain ATCC 49526 / WA1)).